Here is a 101-residue protein sequence, read N- to C-terminus: NAD(P)H-quinone oxidoreductase subunit 4L, chloroplastic (101 aa).

3 consecutive transmembrane segments (helical) span residues 2–22, 32–52, and 64–84; these read ILDS…YGLI, MSLE…SNFI, and IFIM…ILAI.

It belongs to the complex I subunit 4L family. As to quaternary structure, NDH is composed of at least 16 different subunits, 5 of which are encoded in the nucleus.

The protein resides in the plastid. Its subcellular location is the chloroplast thylakoid membrane. It carries out the reaction a plastoquinone + NADH + (n+1) H(+)(in) = a plastoquinol + NAD(+) + n H(+)(out). The enzyme catalyses a plastoquinone + NADPH + (n+1) H(+)(in) = a plastoquinol + NADP(+) + n H(+)(out). NDH shuttles electrons from NAD(P)H:plastoquinone, via FMN and iron-sulfur (Fe-S) centers, to quinones in the photosynthetic chain and possibly in a chloroplast respiratory chain. The immediate electron acceptor for the enzyme in this species is believed to be plastoquinone. Couples the redox reaction to proton translocation, and thus conserves the redox energy in a proton gradient. In Chlorokybus atmophyticus (Soil alga), this protein is NAD(P)H-quinone oxidoreductase subunit 4L, chloroplastic.